A 256-amino-acid chain; its full sequence is Pimeloyl-[acyl-carrier protein] methyl ester esterase (256 aa).

The AB hydrolase-1 domain occupies 15-242; sequence HLVLLHGWGL…AAHAPFISHP (228 aa). Substrate contacts are provided by residues Trp22, 82 to 83, and 143 to 147; these read SL and FLALQ. The Nucleophile role is filled by Ser82. Catalysis depends on residues Asp207 and His235. Position 235 (His235) interacts with substrate.

Belongs to the AB hydrolase superfamily. Carboxylesterase BioH family. As to quaternary structure, monomer.

It is found in the cytoplasm. It carries out the reaction 6-carboxyhexanoyl-[ACP] methyl ester + H2O = 6-carboxyhexanoyl-[ACP] + methanol + H(+). The protein operates within cofactor biosynthesis; biotin biosynthesis. Functionally, the physiological role of BioH is to remove the methyl group introduced by BioC when the pimeloyl moiety is complete. It allows to synthesize pimeloyl-ACP via the fatty acid synthetic pathway through the hydrolysis of the ester bonds of pimeloyl-ACP esters. The chain is Pimeloyl-[acyl-carrier protein] methyl ester esterase from Escherichia coli O6:H1 (strain CFT073 / ATCC 700928 / UPEC).